The chain runs to 143 residues: Holo-[acyl-carrier-protein] synthase (143 aa).

Aspartate 9 and glutamate 63 together coordinate Mg(2+).

Belongs to the P-Pant transferase superfamily. AcpS family. The cofactor is Mg(2+).

The protein resides in the cytoplasm. It catalyses the reaction apo-[ACP] + CoA = holo-[ACP] + adenosine 3',5'-bisphosphate + H(+). Functionally, transfers the 4'-phosphopantetheine moiety from coenzyme A to a Ser of acyl-carrier-protein. This Burkholderia pseudomallei (strain 668) protein is Holo-[acyl-carrier-protein] synthase.